Consider the following 326-residue polypeptide: Protease HtpX homolog (326 aa).

2 helical membrane passes run 10–30 (LNMALATLGIVLLGFALALAV) and 41–61 (VGLMLSILMFIFFLNIIQWLF). H147 contacts Zn(2+). The active site involves E148. H151 provides a ligand contact to Zn(2+). 2 helical membrane-spanning segments follow: residues 159 to 179 (LLMAVGLIPALIYYLGWWIFW) and 197 to 217 (LLFLIGIAMMAVSFVFQLLVL). E224 provides a ligand contact to Zn(2+).

The protein belongs to the peptidase M48B family. Requires Zn(2+) as cofactor.

The protein resides in the cell membrane. The protein is Protease HtpX homolog of Saccharolobus islandicus (strain Y.N.15.51 / Yellowstone #2) (Sulfolobus islandicus).